The chain runs to 411 residues: Solute carrier RCH1 (411 aa).

Over methionine 1–lysine 17 the chain is Cytoplasmic. The chain crosses the membrane as a helical span at residues valine 18–alanine 38. The Extracellular portion of the chain corresponds to histidine 39 to arginine 52. The helical transmembrane segment at alanine 53–methionine 73 threads the bilayer. The Cytoplasmic portion of the chain corresponds to serine 74–phenylalanine 89. Residues threonine 90–isoleucine 110 traverse the membrane as a helical segment. Residues lysine 111–aspartate 120 are Extracellular-facing. Residues tryptophan 121–valine 141 form a helical membrane-spanning segment. Over methionine 142–aspartate 150 the chain is Cytoplasmic. A helical membrane pass occupies residues isoleucine 151–leucine 171. Residues leucine 172–lysine 204 are Extracellular-facing. Residues glutamine 205–proline 225 form a helical membrane-spanning segment. Residues lysine 226–serine 242 are Cytoplasmic-facing. The helical transmembrane segment at phenylalanine 243–threonine 263 threads the bilayer. At serine 264–serine 269 the chain is on the extracellular side. A helical membrane pass occupies residues isoleucine 270–phenylalanine 290. Residues tyrosine 291–aspartate 329 are Cytoplasmic-facing. The helical transmembrane segment at threonine 330 to serine 350 threads the bilayer. Over serine 351–glycine 361 the chain is Extracellular. A helical membrane pass occupies residues isoleucine 362 to valine 382. The Cytoplasmic portion of the chain corresponds to serine 383 to lysine 411.

Belongs to the bile acid:sodium symporter (BASS) (TC 2.A.28) family.

It is found in the cell membrane. The protein localises to the bud neck. Its function is as follows. Solute carrier protein that negatively regulates the cytosolic homeostasis in response to high levels of extracellular calcium. In Candida albicans (strain SC5314 / ATCC MYA-2876) (Yeast), this protein is Solute carrier RCH1.